Consider the following 314-residue polypeptide: Mitochondrial thiamine pyrophosphate carrier 1 (314 aa).

A run of 6 helical transmembrane segments spans residues 14 to 30 (VAAW…GLLA), 84 to 100 (LLYV…YSLF), 116 to 136 (LVVG…FDVL), 170 to 186 (GSIA…SIMF), 217 to 233 (SAGT…TFPL), and 285 to 302 (GILV…VSFW). 3 Solcar repeats span residues 14–103 (VAAW…FNRY), 110–195 (EARL…IRIY), and 210–310 (ELAT…AIHY).

This sequence belongs to the mitochondrial carrier (TC 2.A.29) family.

It is found in the mitochondrion inner membrane. In terms of biological role, mitochondrial transporter that mediates uptake of thiamine pyrophosphate (ThPP) into mitochondria. The sequence is that of Mitochondrial thiamine pyrophosphate carrier 1 (TPC1) from Saccharomyces cerevisiae (strain YJM789) (Baker's yeast).